The following is a 708-amino-acid chain: GID complex associated protein 12 (708 aa).

Positions 381-396 (SSRRNSSFSTASSEPR) are enriched in low complexity. The tract at residues 381-403 (SSRRNSSFSTASSEPRPLSRRRR) is disordered.

Interacts with core components of the GID/CTLH ubiquitin ligase complex. GID12 binds both the substrate receptor GID4 and the tip of GID5 in the scaffolding module, sealing GID4 onto the scaffold.

Functionally, regulator of the GID E3 ligase complex. Modulates both assembly of the substrate receptor GID4 into the GID E3 ligase complex and its activity toward its substrates. GID12-binding remodels the N-degron binding pocket in the GID(SR4) complex, and could limit substrate accessibility of a bulky substrate to a ubiquitynation active site, thereby stabilizing gluconeogenic enzyme substrates. Involved in actin patch formation. The protein is GID complex associated protein 12 of Saccharomyces cerevisiae (strain ATCC 204508 / S288c) (Baker's yeast).